The primary structure comprises 159 residues: SsrA-binding protein (159 aa).

The protein belongs to the SmpB family.

It localises to the cytoplasm. Its function is as follows. Required for rescue of stalled ribosomes mediated by trans-translation. Binds to transfer-messenger RNA (tmRNA), required for stable association of tmRNA with ribosomes. tmRNA and SmpB together mimic tRNA shape, replacing the anticodon stem-loop with SmpB. tmRNA is encoded by the ssrA gene; the 2 termini fold to resemble tRNA(Ala) and it encodes a 'tag peptide', a short internal open reading frame. During trans-translation Ala-aminoacylated tmRNA acts like a tRNA, entering the A-site of stalled ribosomes, displacing the stalled mRNA. The ribosome then switches to translate the ORF on the tmRNA; the nascent peptide is terminated with the 'tag peptide' encoded by the tmRNA and targeted for degradation. The ribosome is freed to recommence translation, which seems to be the essential function of trans-translation. In Dichelobacter nodosus (strain VCS1703A), this protein is SsrA-binding protein.